A 576-amino-acid polypeptide reads, in one-letter code: Zinc finger protein 791 (576 aa).

One can recognise a KRAB domain in the interval 4–90 (VAFEDVSVSF…AENFSPNLSV (87 aa)). 17 consecutive C2H2-type zinc fingers follow at residues 100–122 (YECT…MRSH), 132–154 (YKCK…ERSH), 160–182 (YKCK…ERTH), 188–210 (YECK…ERIH), 216–238 (YECK…ERTH), 244–266 (YACK…MITH), 272–294 (YKCK…ERIH), 300–322 (YKCK…ERIH), 328–350 (YKCK…VRVH), 356–378 (YKCK…ERTH), 384–406 (YECK…KRNH), 412–434 (YECK…MITH), 440–462 (YKCR…ERTH), 468–490 (YECK…KRTH), 496–518 (YECK…MRMH), 524–546 (YKCK…TRIH), and 552–574 (LECK…MRMH).

This sequence belongs to the krueppel C2H2-type zinc-finger protein family.

The protein localises to the nucleus. Functionally, may be involved in transcriptional regulation. This chain is Zinc finger protein 791 (ZNF791), found in Homo sapiens (Human).